Consider the following 930-residue polypeptide: Wings apart-like protein 1 (930 aa).

Positions 540-566 (FSPTSMSGSQSSVSGNEPTTSKTRVGS) are disordered. A compositionally biased stretch (low complexity) spans 541–553 (SPTSMSGSQSSVS). The segment covering 554-566 (GNEPTTSKTRVGS) has biased composition (polar residues). Residues 854 to 909 (KEAEKMIVEAYSALLLAFLSTESRSIRNSIKDYLPKRNLAILVPVLERFVAFHMTL) enclose the WAPL domain.

The protein belongs to the WAPL family. As to quaternary structure, interacts with the cohesin complex throughout the cell cycle. In terms of tissue distribution, expressed in roots, leaves, buds and siliques.

It is found in the nucleus. Its subcellular location is the chromosome. Functionally, regulator of sister chromatid cohesion in meiosis which negatively regulates cohesin association with chromatin, acting as an antagonist of CTF7. Cohesion ensures that chromosome partitioning is accurate in both meiotic and mitotic cells and plays an important role in DNA repair. Essential for the prophase removal of cohesin during meiosis thus determining the timely release of meiotic cohesion. Important for proper spindle attachment and assembly during meiosis. Helps to prevent abnormal centromere association during prophase I in meiocytes. Required for early embryonic patterning. Also involved in chromosome segregation during mitosis. The chain is Wings apart-like protein 1 from Arabidopsis thaliana (Mouse-ear cress).